Here is a 302-residue protein sequence, read N- to C-terminus: Glycine--tRNA ligase alpha subunit (302 aa).

This sequence belongs to the class-II aminoacyl-tRNA synthetase family. Tetramer of two alpha and two beta subunits.

It localises to the cytoplasm. The catalysed reaction is tRNA(Gly) + glycine + ATP = glycyl-tRNA(Gly) + AMP + diphosphate. This chain is Glycine--tRNA ligase alpha subunit, found in Xanthomonas campestris pv. campestris (strain 8004).